The following is a 190-amino-acid chain: Movement protein TGB3 (190 aa).

Residues 1 to 52 (MDPPVILHSPNCSCQFCSSELPSTHTCGSQDRTVPLHVEATAAGHMEAKNFS) are Cytoplasmic-facing. A helical membrane pass occupies residues 53–73 (LQYVLLVAFVSVLLGFSFCVY). Over 74–166 (LKSMSNDEAS…TPCENNVLLK (93 aa)) the chain is Lumenal. 2 positions are modified to phosphotyrosine: tyrosine 89 and tyrosine 120. The short motif at 89–93 (YQDLN) is the Involved in plasmodesmata targeting and virus cell-to-cell movement element. A helical membrane pass occupies residues 167 to 187 (LWKDDLSFTIIAVTVLVGAML). At 188–190 (ARC) the chain is on the cytoplasmic side.

It belongs to the virgaviridae TGB3 movement protein family. In terms of assembly, interacts with movement protein TGB2. TGB1-TGB3-TGB2 complex formation is enhanced by ATP hydrolysis.

It localises to the host cell junction. It is found in the host plasmodesma. Its subcellular location is the host endoplasmic reticulum membrane. The protein localises to the host cytoplasm. The protein resides in the host cytoskeleton. In terms of biological role, participates in the transport of viral genome to neighboring plant cells directly through plasmodesmata, without any budding. TGBp2 and TGBp3 are necessary for intracellular delivery of TGBp1-containing vRNPs to plasmodesmata. Can gate plasmodesmata and increase their size exclusion limit. Induces host actin cytoskeleton network thickening, which probably plays a major role in virus cell-to-cell movement. The polypeptide is Movement protein TGB3 (Solanum nigrum (Black nightshade)).